A 444-amino-acid chain; its full sequence is Probable D-serine dehydratase (444 aa).

N6-(pyridoxal phosphate)lysine is present on K118.

Belongs to the serine/threonine dehydratase family. DsdA subfamily. Requires pyridoxal 5'-phosphate as cofactor.

It carries out the reaction D-serine = pyruvate + NH4(+). The protein is Probable D-serine dehydratase of Acinetobacter baumannii (strain ATCC 17978 / DSM 105126 / CIP 53.77 / LMG 1025 / NCDC KC755 / 5377).